A 562-amino-acid polypeptide reads, in one-letter code: Oxygen-dependent choline dehydrogenase (562 aa).

FAD is bound at residue 4-33; that stretch reads DYIIIGAGSAGNVLATRLTEDPNTTVLLLE. H473 acts as the Proton acceptor in catalysis.

It belongs to the GMC oxidoreductase family. The cofactor is FAD.

It carries out the reaction choline + A = betaine aldehyde + AH2. It catalyses the reaction betaine aldehyde + NAD(+) + H2O = glycine betaine + NADH + 2 H(+). The protein operates within amine and polyamine biosynthesis; betaine biosynthesis via choline pathway; betaine aldehyde from choline (cytochrome c reductase route): step 1/1. Its function is as follows. Involved in the biosynthesis of the osmoprotectant glycine betaine. Catalyzes the oxidation of choline to betaine aldehyde and betaine aldehyde to glycine betaine at the same rate. In Escherichia coli O45:K1 (strain S88 / ExPEC), this protein is Oxygen-dependent choline dehydrogenase.